Reading from the N-terminus, the 612-residue chain is ETS-related transcription factor Elf-1 (612 aa).

Phosphoserine is present on residues serine 110, serine 163, serine 167, and serine 168. The span at 156–169 shows a compositional bias: polar residues; sequence VQETNADSPGASSP. The interval 156 to 199 is disordered; sequence VQETNADSPGASSPEQRKRKKGRKTKPPRPDSPTTTPNISVKKK. Residues 172-182 are compositionally biased toward basic residues; it reads RKRKKGRKTKP. Position 187 is a phosphoserine (serine 187). Threonine 190 carries the post-translational modification Phosphothreonine. Residues 208 to 290 constitute a DNA-binding region (ETS); it reads IYLWEFLLAL…EGQRLVYQFK (83 aa). The disordered stretch occupies residues 300–361; the sequence is DDEDPSSSIE…AANPKDPVEV (62 aa). The segment covering 305–322 has biased composition (low complexity); it reads SSSIESSDQSLSSTTASS. Residues 323-335 are compositionally biased toward polar residues; it reads RNQANRSRVSSSP. Position 431 is a phosphoserine (serine 431). Basic and acidic residues predominate over residues 562-577; sequence EVEKKAEDDLNEDAEK. Residues 562–586 form a disordered region; the sequence is EVEKKAEDDLNEDAEKSAQQPQPYV.

This sequence belongs to the ETS family. Binds to the underphosphorylated form of RB. May interact with other transcription factors in order to regulate specific genes. Interacts with RUNX1. Interacts with SP1; the interaction is inhibited by glycosylation of SP1. In terms of tissue distribution, predominantly found in hematopoietic cells. Detected in other cell types such as fibroblasts.

Its subcellular location is the nucleus. Its function is as follows. Transcription factor that activates the LYN and BLK promoters. The protein is ETS-related transcription factor Elf-1 (Elf1) of Mus musculus (Mouse).